Here is a 170-residue protein sequence, read N- to C-terminus: Transcription factor E (170 aa).

Positions 1–93 (MKEAYLYIVE…TWYVDDEIIR (93 aa)) constitute an HTH TFE/IIEalpha-type domain.

This sequence belongs to the TFE family. As to quaternary structure, monomer. Interaction with RNA polymerase subunits RpoF and RpoE is necessary for Tfe stimulatory transcription activity. Able to interact with Tbp and RNA polymerase in the absence of DNA promoter. Interacts both with the preinitiation and elongation complexes.

Functionally, transcription factor that plays a role in the activation of archaeal genes transcribed by RNA polymerase. Facilitates transcription initiation by enhancing TATA-box recognition by TATA-box-binding protein (Tbp), and transcription factor B (Tfb) and RNA polymerase recruitment. Not absolutely required for transcription in vitro, but particularly important in cases where Tbp or Tfb function is not optimal. It dynamically alters the nucleic acid-binding properties of RNA polymerases by stabilizing the initiation complex and destabilizing elongation complexes. Seems to translocate with the RNA polymerase following initiation and acts by binding to the non template strand of the transcription bubble in elongation complexes. The polypeptide is Transcription factor E (Pyrobaculum islandicum (strain DSM 4184 / JCM 9189 / GEO3)).